A 696-amino-acid chain; its full sequence is Spermatogenesis-associated protein 21 (696 aa).

Disordered regions lie at residues 1-301 (MDNR…AAGT) and 329-386 (LKAR…SVPT). Positions 67 to 86 (KGPRYRDTFKEGPSELRTQE) are enriched in basic and acidic residues. The span at 96 to 116 (KQSSWVPQEGSQELQAGQDQS) shows a compositional bias: polar residues. Positions 195-209 (GDKRPKEADVPHIRP) are enriched in basic and acidic residues. The span at 223–235 (DSSQEAMPPTSTV) shows a compositional bias: polar residues. Basic and acidic residues predominate over residues 275 to 287 (EVRDIGERREPDR). 2 stretches are compositionally biased toward low complexity: residues 288–297 (VQQQPQKPVV) and 339–366 (SPRT…SGPS). The stretch at 424–451 (EPEEQSLQKLYQNREKSEEQLTLKQEEA) forms a coiled coil. Residues 481-516 (VTPAQVEDALMSADVNGDGHVDFKDFLAVMTDTRRF) enclose the EF-hand domain. Ca(2+)-binding residues include Asp494, Asn496, Asp498, His500, and Asp505. The segment at 646–696 (KPTNHYVQDQCTTPGLAPDIRSPFFQSRSQGNREHNSDSRKWPSSVPSRTH) is disordered. A compositionally biased stretch (basic and acidic residues) spans 676–686 (GNREHNSDSRK).

Functionally, involved in the differentiation of haploid spermatids. The polypeptide is Spermatogenesis-associated protein 21 (SPATA21) (Macaca fascicularis (Crab-eating macaque)).